The following is a 357-amino-acid chain: Tribbles homolog 3 (357 aa).

The tract at residues 1-63 (MRASPLAVPA…PAPVHAPDVT (63 aa)) is disordered. The interval 1 to 127 (MRASPLAVPA…GHVARPAEVL (127 aa)) is interaction with DDIT3/CHOP. Residues 68-316 (LGPYVLLEPE…SGILLHPWLR (249 aa)) form the Protein kinase domain. The tract at residues 333-357 (DQVVPEGPGLEEAEEEGERDMGLYG) is disordered. The segment covering 341-350 (GLEEAEEEGE) has biased composition (acidic residues).

It belongs to the protein kinase superfamily. CAMK Ser/Thr protein kinase family. Tribbles subfamily. As to quaternary structure, interacts with AKT1, AKT2, MAP2K1 and MAP2K7. Interacts with ATF4. Interacts with DDIT3/CHOP and inhibits its interaction with EP300/P300. Interacts with APOBEC3C. Interacts (via N-terminus) with APOBEC3A. Interacts with RELA.

The protein resides in the nucleus. Its function is as follows. Inactive protein kinase which acts as a regulator of the integrated stress response (ISR), a process for adaptation to various stress. Inhibits the transcriptional activity of DDIT3/CHOP and is involved in DDIT3/CHOP-dependent cell death during ER stress. May play a role in programmed neuronal cell death but does not appear to affect non-neuronal cells. Acts as a negative feedback regulator of the ATF4-dependent transcription during the ISR: while TRIB3 expression is promoted by ATF4, TRIB3 protein interacts with ATF4 and inhibits ATF4 transcription activity. Disrupts insulin signaling by binding directly to Akt kinases and blocking their activation. May bind directly to and mask the 'Thr-308' phosphorylation site in AKT1. Interacts with the NF-kappa-B transactivator p65 RELA and inhibits its phosphorylation and thus its transcriptional activation activity. Interacts with MAPK kinases and regulates activation of MAP kinases. Can inhibit APOBEC3A editing of nuclear DNA. This chain is Tribbles homolog 3 (TRIB3), found in Bos taurus (Bovine).